We begin with the raw amino-acid sequence, 123 residues long: Large ribosomal subunit protein uL29 (123 aa).

Lysine 19 carries the post-translational modification N6-acetyllysine. Lysine 25 participates in a covalent cross-link: Glycyl lysine isopeptide (Lys-Gly) (interchain with G-Cter in SUMO2). At serine 29 the chain carries Phosphoserine. Lysine 43 carries the N6-acetyllysine modification. Positions 85–123 are disordered; the sequence is PKKTRAMRRRLNKHEESLKTKKQQRKERLYPLRKYAVKA. Positions 86 to 96 are enriched in basic residues; that stretch reads KKTRAMRRRLN.

The protein belongs to the universal ribosomal protein uL29 family. In terms of assembly, component of the large ribosomal subunit.

Its subcellular location is the cytoplasm. In terms of biological role, component of the large ribosomal subunit. The ribosome is a large ribonucleoprotein complex responsible for the synthesis of proteins in the cell. The sequence is that of Large ribosomal subunit protein uL29 (RPL35) from Oryctolagus cuniculus (Rabbit).